The sequence spans 256 residues: Galactitol 2-dehydrogenase (256 aa).

Residues 15-17 (RGI), Asp-36, 59-60 (DV), Asn-86, Tyr-152, and Lys-156 each bind NAD(+). Tyr-152 acts as the Proton acceptor in catalysis.

This sequence belongs to the short-chain dehydrogenases/reductases (SDR) family.

It catalyses the reaction galactitol + NAD(+) = keto-D-tagatose + NADH + H(+). The enzyme catalyses keto-D-fructose + NADH + H(+) = D-sorbitol + NAD(+). Its pathway is carbohydrate metabolism. Its function is as follows. Involved in galactitol catabolism. Catalyzes the oxidation of galactitol to D-tagatose. Can also catalyze the oxidation of D-sorbitol to D-fructose. The protein is Galactitol 2-dehydrogenase of Agrobacterium fabrum (strain C58 / ATCC 33970) (Agrobacterium tumefaciens (strain C58)).